Here is a 352-residue protein sequence, read N- to C-terminus: MSDPVFFSSVGPILLAEVAALAGAALPEGLDRELAIRGAAPLESAGPDDLAYMDNAKYAEALGLTRARACLVSPRFAARVPEGTIALVTPQPYRGFAKVLARLFPSAARPTSLFGATGVSPGSFVHPAARLEPGVVVDPGVVIGPGAEIGAETVLAAGAVIGPGTRIGRGCAVGPGASVLHALIGNRVIIHGGARIGQDGFGFAMGAGGHLKVPQVGRVIIQDDVEIGANTTIDRGASRDTIIGEGTKIDNLVQIAHNVVIGRHCVIVAQVGISGSTTLEDYVVLGGQVGVVGHLRIGMGAQIAGSSNINKDVPPGARWGGTPAKPVREWFREMTTLKRIAARERLAEDTAE.

His-257 serves as the catalytic Proton acceptor.

Belongs to the transferase hexapeptide repeat family. LpxD subfamily. As to quaternary structure, homotrimer.

The catalysed reaction is a UDP-3-O-[(3R)-3-hydroxyacyl]-alpha-D-glucosamine + a (3R)-hydroxyacyl-[ACP] = a UDP-2-N,3-O-bis[(3R)-3-hydroxyacyl]-alpha-D-glucosamine + holo-[ACP] + H(+). It functions in the pathway bacterial outer membrane biogenesis; LPS lipid A biosynthesis. Functionally, catalyzes the N-acylation of UDP-3-O-acylglucosamine using 3-hydroxyacyl-ACP as the acyl donor. Is involved in the biosynthesis of lipid A, a phosphorylated glycolipid that anchors the lipopolysaccharide to the outer membrane of the cell. The chain is UDP-3-O-acylglucosamine N-acyltransferase from Methylobacterium nodulans (strain LMG 21967 / CNCM I-2342 / ORS 2060).